The chain runs to 775 residues: DENN domain-containing protein 1B (775 aa).

The region spanning 14–143 (DLVLKVKCHA…YNHPVPKANT (130 aa)) is the uDENN domain. The cDENN domain maps to 180-316 (GLPTIPESRN…VVSALKNKLK (137 aa)). Positions 318 to 395 (QSTATGDGVA…DGRLAKLNAG (78 aa)) constitute a dDENN domain. The FXDXF motif motif lies at 398–402 (FSDVF). Tyr520 is subject to Phosphotyrosine. Phosphoserine occurs at positions 535, 536, 549, and 552. The short motif at 566 to 575 (DLLGEILDTL) is the Clathrin box element. Disordered stretches follow at residues 635-654 (DSAL…VSSS) and 671-706 (HLGA…KRET). Positions 639-651 (HGKHLPPSPRKRV) are enriched in basic residues. Residues Ser652 and Ser653 each carry the phosphoserine modification. The segment covering 695–706 (QTDKGKTEKRET) has biased composition (basic and acidic residues).

As to quaternary structure, interacts with RAB35. Interacts with clathrin heavy chain/CLTC. Interacts with components of the adapter protein complex 2 (AP-2) AP2A2 and AP2B1. Interacts with CD3E. In terms of processing, phosphorylated on serine and/or threonine, possibly regulating the guanine nucleotide exchange factor (GEF) activity. Highly expressed in dendritic and natural killer cells and at lower levels in other myeloid lineage cells and in pituitary. Significantly up-regulated in effector memory T-cells as compared with naive T-cells.

It localises to the cytoplasm. The protein localises to the cytosol. The protein resides in the cytoplasmic vesicle. Its subcellular location is the clathrin-coated vesicle. Guanine nucleotide exchange factor (GEF) for RAB35 that acts as a regulator of T-cell receptor (TCR) internalization in TH2 cells. Acts by promoting the exchange of GDP to GTP, converting inactive GDP-bound RAB35 into its active GTP-bound form. Plays a role in clathrin-mediated endocytosis. Controls cytokine production in TH2 lymphocytes by controlling the rate of TCR internalization and routing to endosomes: acts by mediating clathrin-mediated endocytosis of TCR via its interaction with the adapter protein complex 2 (AP-2) and GEF activity. Dysregulation leads to impaired TCR down-modulation and recycling, affecting cytokine production in TH2 cells. This is DENN domain-containing protein 1B from Homo sapiens (Human).